A 630-amino-acid polypeptide reads, in one-letter code: Pro-interleukin-16 (630 aa).

Disordered stretches follow at residues 30–268 and 316–343; these read ENPG…FPLT and PKEG…ASDT. The segment covering 129–143 has biased composition (low complexity); that stretch reads IRASSSSSIKQRISS. Serine 220 is modified (phosphoserine). Residues 321–343 show a composition bias toward polar residues; sequence SPTSSSNEDSAANGSAETSASDT. Residues 404-500 form an interaction with PPP1R12A, PPP1R12B and PPP1R12C region; the sequence is KQLDSIHVTI…IVTRKLTAES (97 aa). 2 PDZ domains span residues 410–495 and 532–617; these read HVTI…VTRK and TVTL…IRRK.

As to quaternary structure, homotetramer. Pro-interleukin-16 interacts (via PDZ 2 domain) with PPP1R12A, PPP1R12B and PPP1R12C. Pro-interleukin-16 interacts with GRIN2A. Pro-interleukin-16 interacts with GABPB1. Pro-interleukin-16 interacts (via PDZ 3 domain) with HDAC3.

The protein localises to the secreted. It localises to the cytoplasm. The protein resides in the nucleus. Its function is as follows. Interleukin-16 stimulates a migratory response in CD4+ lymphocytes, monocytes, and eosinophils. Primes CD4+ T-cells for IL-2 and IL-15 responsiveness. Also induces T-lymphocyte expression of interleukin 2 receptor. Ligand for CD4. Functionally, pro-interleukin-16 is involved in cell cycle progression in T-cells. Appears to be involved in transcriptional regulation of SKP2 and is probably part of a transcriptional repression complex on the core promoter of the SKP2 gene. May act as a scaffold for GABPB1 (the DNA-binding subunit the GABP transcription factor complex) and HDAC3 thus maintaining transcriptional repression and blocking cell cycle progression in resting T-cells. This Macaca mulatta (Rhesus macaque) protein is Pro-interleukin-16 (IL16).